A 444-amino-acid chain; its full sequence is Tubulin beta 8B (444 aa).

Residues 1–4 carry the MREI motif motif; the sequence is MREI. The GTP site is built by glutamine 11, glutamate 69, serine 138, glycine 142, threonine 143, and glycine 144. Glutamate 69 is a binding site for Mg(2+). Phosphoserine; by CDK1 is present on serine 172. Residues asparagine 204 and asparagine 226 each contribute to the GTP site. Residues 421 to 444 form a disordered region; it reads EYQQYQDATAEEEEDEEYAEEEVA. A compositionally biased stretch (acidic residues) spans 429 to 444; it reads TAEEEEDEEYAEEEVA. Glutamate 436 bears the 5-glutamyl polyglutamate mark.

This sequence belongs to the tubulin family. As to quaternary structure, dimer of alpha and beta chains. A typical microtubule is a hollow water-filled tube with an outer diameter of 25 nm and an inner diameter of 15 nM. Alpha-beta heterodimers associate head-to-tail to form protofilaments running lengthwise along the microtubule wall with the beta-tubulin subunit facing the microtubule plus end conferring a structural polarity. Microtubules usually have 13 protofilaments but different protofilament numbers can be found in some organisms and specialized cells. Requires Mg(2+) as cofactor. Post-translationally, some glutamate residues at the C-terminus are polyglutamylated, resulting in polyglutamate chains on the gamma-carboxyl group. Polyglutamylation plays a key role in microtubule severing by spastin (SPAST). SPAST preferentially recognizes and acts on microtubules decorated with short polyglutamate tails: severing activity by SPAST increases as the number of glutamates per tubulin rises from one to eight, but decreases beyond this glutamylation threshold. Glutamylation is also involved in cilia motility. Some glutamate residues at the C-terminus are monoglycylated but not polyglycylated due to the absence of functional TTLL10 in human. Monoglycylation is mainly limited to tubulin incorporated into cilia and flagella axonemes, which is required for their stability and maintenance. Flagella glycylation controls sperm motility. Both polyglutamylation and monoglycylation can coexist on the same protein on adjacent residues, and lowering glycylation levels increases polyglutamylation, and reciprocally. In terms of processing, phosphorylated on Ser-172 by CDK1 during the cell cycle, from metaphase to telophase, but not in interphase. This phosphorylation inhibits tubulin incorporation into microtubules.

The protein localises to the cytoplasm. The protein resides in the cytoskeleton. Tubulin is the major constituent of microtubules, a cylinder consisting of laterally associated linear protofilaments composed of alpha- and beta-tubulin heterodimers. Microtubules grow by the addition of GTP-tubulin dimers to the microtubule end, where a stabilizing cap forms. Below the cap, tubulin dimers are in GDP-bound state, owing to GTPase activity of alpha-tubulin. The chain is Tubulin beta 8B from Homo sapiens (Human).